The following is a 173-amino-acid chain: Peptide methionine sulfoxide reductase MsrA (173 aa).

Residue Cys-10 is part of the active site.

This sequence belongs to the MsrA Met sulfoxide reductase family.

The catalysed reaction is L-methionyl-[protein] + [thioredoxin]-disulfide + H2O = L-methionyl-(S)-S-oxide-[protein] + [thioredoxin]-dithiol. It catalyses the reaction [thioredoxin]-disulfide + L-methionine + H2O = L-methionine (S)-S-oxide + [thioredoxin]-dithiol. Its function is as follows. Has an important function as a repair enzyme for proteins that have been inactivated by oxidation. Catalyzes the reversible oxidation-reduction of methionine sulfoxide in proteins to methionine. The polypeptide is Peptide methionine sulfoxide reductase MsrA (Psychrobacter arcticus (strain DSM 17307 / VKM B-2377 / 273-4)).